Consider the following 354-residue polypeptide: UPF0283 membrane protein CGSHiGG_02710 (354 aa).

3 consecutive transmembrane segments (helical) span residues 57 to 77, 87 to 107, and 211 to 231; these read LLKFTALLFGLATVAQSVQWI, IYLAFALVSLIIILLGIKEII, and ESAVIVAISPLAVVDMFFIAW.

This sequence belongs to the UPF0283 family.

The protein resides in the cell inner membrane. The chain is UPF0283 membrane protein CGSHiGG_02710 from Haemophilus influenzae (strain PittGG).